The following is a 220-amino-acid chain: Protein-methionine-sulfoxide reductase heme-binding subunit MsrQ (220 aa).

5 helical membrane passes run 20–40 (IWLLYAVGFVPAVWTFYLGAS), 52–72 (EHTLGLWALRFLILTLMVTPI), 86–106 (ALGLLAFYYALMHFATYMVLD), 122–142 (PFITIGMISLVLLVPLALTSN), and 159–179 (LVYVAIAGGAIHFIMSVKSWP).

It belongs to the MsrQ family. As to quaternary structure, heterodimer of a catalytic subunit (MsrP) and a heme-binding subunit (MsrQ). It depends on FMN as a cofactor. The cofactor is heme b.

It localises to the cell inner membrane. In terms of biological role, part of the MsrPQ system that repairs oxidized periplasmic proteins containing methionine sulfoxide residues (Met-O), using respiratory chain electrons. Thus protects these proteins from oxidative-stress damage caused by reactive species of oxygen and chlorine generated by the host defense mechanisms. MsrPQ is essential for the maintenance of envelope integrity under bleach stress, rescuing a wide series of structurally unrelated periplasmic proteins from methionine oxidation. MsrQ provides electrons for reduction to the reductase catalytic subunit MsrP, using the quinone pool of the respiratory chain. The protein is Protein-methionine-sulfoxide reductase heme-binding subunit MsrQ of Brucella anthropi (strain ATCC 49188 / DSM 6882 / CCUG 24695 / JCM 21032 / LMG 3331 / NBRC 15819 / NCTC 12168 / Alc 37) (Ochrobactrum anthropi).